The following is a 344-amino-acid chain: DNA-directed RNA polymerase subunit alpha (344 aa).

The alpha N-terminal domain (alpha-NTD) stretch occupies residues 1 to 232; it reads MGQYTINLRE…HLFLPPFGLE (232 aa). Residues 270–344 are alpha C-terminal domain (alpha-CTD); the sequence is LIKDQFLEYS…KRFGINLKLK (75 aa).

Belongs to the RNA polymerase alpha chain family. As to quaternary structure, in plastids the minimal PEP RNA polymerase catalytic core is composed of four subunits: alpha, beta, beta', and beta''. When a (nuclear-encoded) sigma factor is associated with the core the holoenzyme is formed, which can initiate transcription.

Its subcellular location is the plastid. The protein localises to the chloroplast. The catalysed reaction is RNA(n) + a ribonucleoside 5'-triphosphate = RNA(n+1) + diphosphate. In terms of biological role, DNA-dependent RNA polymerase catalyzes the transcription of DNA into RNA using the four ribonucleoside triphosphates as substrates. In Spirogyra maxima (Green alga), this protein is DNA-directed RNA polymerase subunit alpha.